We begin with the raw amino-acid sequence, 157 residues long: UPF0178 protein Nwi_2152 (157 aa).

It belongs to the UPF0178 family.

The polypeptide is UPF0178 protein Nwi_2152 (Nitrobacter winogradskyi (strain ATCC 25391 / DSM 10237 / CIP 104748 / NCIMB 11846 / Nb-255)).